Here is a 93-residue protein sequence, read N- to C-terminus: MANKKIDHREEAVELLKQDAKRILQLIKVQMDNLTLPQCPAYEEVLDTQMYGLSREINFATRLGLIEPEEGKKLMSTLEKELSALHELSMSKK.

Belongs to the UPF0358 family.

The sequence is that of UPF0358 protein LMHCC_1561 from Listeria monocytogenes serotype 4a (strain HCC23).